We begin with the raw amino-acid sequence, 211 residues long: Uracil phosphoribosyltransferase (211 aa).

Residues Arg-78, Arg-103, and 130 to 138 (DPMLATGGT) each bind 5-phospho-alpha-D-ribose 1-diphosphate. Uracil is bound by residues Ile-195 and 200-202 (GDA). Asp-201 is a binding site for 5-phospho-alpha-D-ribose 1-diphosphate.

Belongs to the UPRTase family. The cofactor is Mg(2+).

The enzyme catalyses UMP + diphosphate = 5-phospho-alpha-D-ribose 1-diphosphate + uracil. It participates in pyrimidine metabolism; UMP biosynthesis via salvage pathway; UMP from uracil: step 1/1. Its activity is regulated as follows. Allosterically activated by GTP. Functionally, catalyzes the conversion of uracil and 5-phospho-alpha-D-ribose 1-diphosphate (PRPP) to UMP and diphosphate. The chain is Uracil phosphoribosyltransferase from Streptomyces griseus subsp. griseus (strain JCM 4626 / CBS 651.72 / NBRC 13350 / KCC S-0626 / ISP 5235).